Reading from the N-terminus, the 157-residue chain is MNGNSTNNEQLQQELATTQDQVASIIESFVELGVSIYDFPGTPEATKGMITNLQRNVDRLYKLNVRSNDPQSSLSKVDIPLEVVQYIEDGRNPDIYTREFVEAIRRSNQYQRGKMHGLKQLRDSLADKIVDEFPELKEPVEDIIKRTSPIDNVSNTH.

This sequence belongs to the Mediator complex subunit 10 family. As to quaternary structure, component of the Mediator complex, which is composed of at least 21 subunits that form three structurally distinct submodules. The Mediator head module contains MED6, MED8, MED11, SRB4/MED17, SRB5/MED18, ROX3/MED19, SRB2/MED20 and SRB6/MED22, the middle module contains MED1, MED4, NUT1/MED5, MED7, CSE2/MED9, NUT2/MED10, SRB7/MED21 and SOH1/MED31, and the tail module contains MED2, PGD1/MED3, RGR1/MED14, GAL11/MED15 and SIN4/MED16. The head and the middle modules interact directly with RNA polymerase II, whereas the elongated tail module interacts with gene-specific regulatory proteins. NUT2/MED10 interacts directly with SRB7/MED21.

It is found in the nucleus. Component of the Mediator complex, a coactivator involved in the regulated transcription of nearly all RNA polymerase II-dependent genes. Mediator functions as a bridge to convey information from gene-specific regulatory proteins to the basal RNA polymerase II transcription machinery. The Mediator complex, having a compact conformation in its free form, is recruited to promoters by direct interactions with regulatory proteins and serves for the assembly of a functional preinitiation complex with RNA polymerase II and the general transcription factors. The Mediator complex unfolds to an extended conformation and partially surrounds RNA polymerase II, specifically interacting with the unphosphorylated form of the C-terminal domain (CTD) of RNA polymerase II. The Mediator complex dissociates from the RNA polymerase II holoenzyme and stays at the promoter when transcriptional elongation begins. This Saccharomyces cerevisiae (strain ATCC 204508 / S288c) (Baker's yeast) protein is Mediator of RNA polymerase II transcription subunit 10 (NUT2).